The sequence spans 226 residues: MPIEDRDNAYLITHALAKDTLSQLRDIETEQVAFRKGLVKLGRICGYEIIDGAMETEYAHVQTPLTETTGEQVSGLDNIVIVNVLRAATPFVEGLLKAFPRAKQGVISAGRDEAAGMNQDGMFPITIDYVKLPEITANDTVVVADPMLATGSTMCAVLDHVNDAAKSKPKNLFVLSAVSAPEGLLHVGSEFSSADLLTVAIDDYLDDEGYIVPGLGDAGDRAFRTV.

36-40 (KGLVK) contributes to the GTP binding site. 5-phospho-alpha-D-ribose 1-diphosphate contacts are provided by residues arginine 86, arginine 111, and 145-153 (DPMLATGST). Residues isoleucine 211 and 216–218 (GDA) each bind uracil. Aspartate 217 contacts 5-phospho-alpha-D-ribose 1-diphosphate.

Belongs to the UPRTase family. Mg(2+) is required as a cofactor.

The enzyme catalyses UMP + diphosphate = 5-phospho-alpha-D-ribose 1-diphosphate + uracil. It participates in pyrimidine metabolism; UMP biosynthesis via salvage pathway; UMP from uracil: step 1/1. With respect to regulation, allosterically activated by GTP. Catalyzes the conversion of uracil and 5-phospho-alpha-D-ribose 1-diphosphate (PRPP) to UMP and diphosphate. This chain is Uracil phosphoribosyltransferase, found in Haloquadratum walsbyi (strain DSM 16790 / HBSQ001).